Consider the following 139-residue polypeptide: 3-hydroxyacyl-[acyl-carrier-protein] dehydratase FabZ (139 aa).

Histidine 46 is an active-site residue.

It belongs to the thioester dehydratase family. FabZ subfamily.

It localises to the cytoplasm. It catalyses the reaction a (3R)-hydroxyacyl-[ACP] = a (2E)-enoyl-[ACP] + H2O. Involved in unsaturated fatty acids biosynthesis. Catalyzes the dehydration of short chain beta-hydroxyacyl-ACPs and long chain saturated and unsaturated beta-hydroxyacyl-ACPs. This chain is 3-hydroxyacyl-[acyl-carrier-protein] dehydratase FabZ, found in Streptococcus pyogenes serotype M3 (strain ATCC BAA-595 / MGAS315).